The sequence spans 228 residues: Phosphoribosylformylglycinamidine synthase subunit PurQ (228 aa).

The region spanning 2-225 (KAAVISFPGS…INQTEGADVR (224 aa)) is the Glutamine amidotransferase type-1 domain. C86 functions as the Nucleophile in the catalytic mechanism. Active-site residues include H194 and E196.

As to quaternary structure, part of the FGAM synthase complex composed of 1 PurL, 1 PurQ and 2 PurS subunits.

It is found in the cytoplasm. It catalyses the reaction N(2)-formyl-N(1)-(5-phospho-beta-D-ribosyl)glycinamide + L-glutamine + ATP + H2O = 2-formamido-N(1)-(5-O-phospho-beta-D-ribosyl)acetamidine + L-glutamate + ADP + phosphate + H(+). The enzyme catalyses L-glutamine + H2O = L-glutamate + NH4(+). Its pathway is purine metabolism; IMP biosynthesis via de novo pathway; 5-amino-1-(5-phospho-D-ribosyl)imidazole from N(2)-formyl-N(1)-(5-phospho-D-ribosyl)glycinamide: step 1/2. Part of the phosphoribosylformylglycinamidine synthase complex involved in the purines biosynthetic pathway. Catalyzes the ATP-dependent conversion of formylglycinamide ribonucleotide (FGAR) and glutamine to yield formylglycinamidine ribonucleotide (FGAM) and glutamate. The FGAM synthase complex is composed of three subunits. PurQ produces an ammonia molecule by converting glutamine to glutamate. PurL transfers the ammonia molecule to FGAR to form FGAM in an ATP-dependent manner. PurS interacts with PurQ and PurL and is thought to assist in the transfer of the ammonia molecule from PurQ to PurL. The chain is Phosphoribosylformylglycinamidine synthase subunit PurQ from Lacticaseibacillus paracasei (strain ATCC 334 / BCRC 17002 / CCUG 31169 / CIP 107868 / KCTC 3260 / NRRL B-441) (Lactobacillus paracasei).